We begin with the raw amino-acid sequence, 1129 residues long: Egg-laying defective protein 27 (1129 aa).

Positions 1 to 11 (MSRFDSQCSSE) are enriched in polar residues. Positions 1-43 (MSRFDSQCSSEDVNKEDECVPSSSEDSQDGVSSPMENDDEPEF) are disordered. The segment covering 22 to 33 (SSSEDSQDGVSS) has biased composition (low complexity). A BAH domain is found at 87-223 (TLYRLRDSVF…QDSTKLASTH (137 aa)). Residues 224–327 (YAIRVGTSFQ…DALSELNAND (104 aa)) form the ELM2 domain. Residues 332–384 (TDVDNMTQDDAKKFAKGIKQLGKNFSRIHRELLPHHSREQLVSYYYLWKKTPE) form the SANT domain. The segment at 388–434 (PKQAARRVNPTSIKRPTKEKVKASRPTSTEYLDFDSASESDVENNGP) is disordered. Residues 419 to 429 (LDFDSASESDV) show a composition bias toward acidic residues. The segment at 439-485 (CHHCYGAESKDWHHANGLLLCTDCRLHYKKYGQLRQIANRPSQVPAC) adopts a GATA-type; atypical zinc-finger fold. 5 disordered regions span residues 488-636 (KRSN…DPMP), 693-717 (RDET…SPED), 790-814 (QQNQ…QQAQ), 899-950 (MIAE…HAAA), and 982-1040 (MAAQ…REHA). 2 stretches are compositionally biased toward polar residues: residues 525-545 (PSTV…TKKL) and 561-573 (VINN…SSEE). Composition is skewed to acidic residues over residues 613–634 (SYDD…DDDP) and 705–717 (KDDE…SPED). The span at 899–914 (MIAEQQQQQRHAAAQQ) shows a compositional bias: low complexity. A compositionally biased stretch (basic and acidic residues) spans 915–932 (LREREQREQRERERERQH). Composition is skewed to low complexity over residues 933–950 (QQQA…HAAA) and 983–999 (AAQQ…AQAQ). A compositionally biased stretch (basic and acidic residues) spans 1000–1040 (RDQERERREREAREREAAREREREQAAREAAARDQAAREHA).

In terms of assembly, interacts with ceh-6, sem-4 and sox-2. Interacts with wdr-5.1. In terms of tissue distribution, expression detected in anterior intestine and head region.

It is found in the nucleus. Its function is as follows. Transcription factor which promotes stress survival and delays aging. Required for cell cycle progression and development of the mesodermal and endodermal embryonic lineages. Required for normal T-cell polarity, for correct migration of QL neuroblast descendants and other cells, for embryonic patterning and for the embryonic expression of hlh-8. Also required for the transdifferentiation of the Y rectal epithelial cell to the PDA motor neuron during larval development. The chain is Egg-laying defective protein 27 from Caenorhabditis elegans.